A 198-amino-acid polypeptide reads, in one-letter code: 7-methyl-GTP pyrophosphatase (198 aa).

Residue Asp75 is the Proton acceptor of the active site.

The protein belongs to the Maf family. YceF subfamily. A divalent metal cation is required as a cofactor.

It is found in the cytoplasm. It catalyses the reaction N(7)-methyl-GTP + H2O = N(7)-methyl-GMP + diphosphate + H(+). Its function is as follows. Nucleoside triphosphate pyrophosphatase that hydrolyzes 7-methyl-GTP (m(7)GTP). May have a dual role in cell division arrest and in preventing the incorporation of modified nucleotides into cellular nucleic acids. This chain is 7-methyl-GTP pyrophosphatase, found in Bartonella quintana (strain Toulouse) (Rochalimaea quintana).